We begin with the raw amino-acid sequence, 760 residues long: Xaa-Pro dipeptidyl-peptidase (760 aa).

Catalysis depends on charge relay system residues S349, D469, and H499.

The protein belongs to the peptidase S15 family. As to quaternary structure, homodimer.

It is found in the cytoplasm. The catalysed reaction is Hydrolyzes Xaa-Pro-|- bonds to release unblocked, N-terminal dipeptides from substrates including Ala-Pro-|-p-nitroanilide and (sequentially) Tyr-Pro-|-Phe-Pro-|-Gly-Pro-|-Ile.. Functionally, removes N-terminal dipeptides sequentially from polypeptides having unsubstituted N-termini provided that the penultimate residue is proline. This is Xaa-Pro dipeptidyl-peptidase from Streptococcus pyogenes serotype M18 (strain MGAS8232).